Reading from the N-terminus, the 582-residue chain is Tetratricopeptide repeat protein 24 (582 aa).

Residues methionine 1 to arginine 31 are disordered. 8 TPR repeats span residues isoleucine 36–alanine 69, glutamine 79–glutamine 112, glycine 117–glutamine 150, glycine 154–glutamate 187, glycine 236–glutamate 271, alanine 273–valine 306, glycine 313–serine 346, and tryptophan 353–glutamate 386. Disordered stretches follow at residues threonine 418–proline 481 and valine 548–valine 582. A compositionally biased stretch (polar residues) spans glycine 441–glycine 454. Residues glutamate 462–serine 472 show a composition bias toward basic and acidic residues.

This is Tetratricopeptide repeat protein 24 (TTC24) from Homo sapiens (Human).